The following is a 283-amino-acid chain: Glutamate racemase (283 aa).

Substrate is bound by residues 28–29 (DS) and 60–61 (YG). The Proton donor/acceptor role is filled by C92. 93 to 94 (NT) is a binding site for substrate. The active-site Proton donor/acceptor is the C204. 205-206 (TH) serves as a coordination point for substrate.

Belongs to the aspartate/glutamate racemases family.

It catalyses the reaction L-glutamate = D-glutamate. Its pathway is cell wall biogenesis; peptidoglycan biosynthesis. Its function is as follows. Provides the (R)-glutamate required for cell wall biosynthesis. The chain is Glutamate racemase from Klebsiella pneumoniae (strain 342).